A 123-amino-acid chain; its full sequence is MPTINQLIANPRKIQKSRNKVPALEACPQKRGVCTRVYTTTPKKPNSALRKVAKVRLTNGFEVIGYIPGEGHNLQEHSVVMIRGGRVKDLPGVRYHILRGVLDTQGVKNRKQRRSKYGAKRPK.

3-methylthioaspartic acid is present on D89.

It belongs to the universal ribosomal protein uS12 family. As to quaternary structure, part of the 30S ribosomal subunit. Contacts proteins S8 and S17. May interact with IF1 in the 30S initiation complex.

Its function is as follows. With S4 and S5 plays an important role in translational accuracy. Functionally, interacts with and stabilizes bases of the 16S rRNA that are involved in tRNA selection in the A site and with the mRNA backbone. Located at the interface of the 30S and 50S subunits, it traverses the body of the 30S subunit contacting proteins on the other side and probably holding the rRNA structure together. The combined cluster of proteins S8, S12 and S17 appears to hold together the shoulder and platform of the 30S subunit. The sequence is that of Small ribosomal subunit protein uS12 from Methylobacterium nodulans (strain LMG 21967 / CNCM I-2342 / ORS 2060).